A 146-amino-acid chain; its full sequence is UPF0178 protein CTC_02403 (146 aa).

This sequence belongs to the UPF0178 family.

The protein is UPF0178 protein CTC_02403 of Clostridium tetani (strain Massachusetts / E88).